Here is a 360-residue protein sequence, read N- to C-terminus: Holliday junction branch migration complex subunit RuvB (360 aa).

Residues 1-23 form a disordered region; sequence MIASVGDSRYYPKSVANGEKSDQ. A large ATPase domain (RuvB-L) region spans residues 12-204; that stretch reads PKSVANGEKS…FGIVLRLEFY (193 aa). ATP is bound by residues Leu43, Arg44, Gly85, Lys88, Thr89, Thr90, 151-153, Arg194, Tyr204, and Arg241; that span reads EDY. Position 89 (Thr89) interacts with Mg(2+). The small ATPAse domain (RuvB-S) stretch occupies residues 205–275; sequence TTEDLKIILK…TAQKALEMLE (71 aa). The tract at residues 278 to 360 is head domain (RuvB-H); sequence QHGFDEVDRR…KPPKKQDSLF (83 aa). DNA contacts are provided by Arg333 and Arg338.

The protein belongs to the RuvB family. As to quaternary structure, homohexamer. Forms an RuvA(8)-RuvB(12)-Holliday junction (HJ) complex. HJ DNA is sandwiched between 2 RuvA tetramers; dsDNA enters through RuvA and exits via RuvB. An RuvB hexamer assembles on each DNA strand where it exits the tetramer. Each RuvB hexamer is contacted by two RuvA subunits (via domain III) on 2 adjacent RuvB subunits; this complex drives branch migration. In the full resolvosome a probable DNA-RuvA(4)-RuvB(12)-RuvC(2) complex forms which resolves the HJ.

Its subcellular location is the cytoplasm. It carries out the reaction ATP + H2O = ADP + phosphate + H(+). Functionally, the RuvA-RuvB-RuvC complex processes Holliday junction (HJ) DNA during genetic recombination and DNA repair, while the RuvA-RuvB complex plays an important role in the rescue of blocked DNA replication forks via replication fork reversal (RFR). RuvA specifically binds to HJ cruciform DNA, conferring on it an open structure. The RuvB hexamer acts as an ATP-dependent pump, pulling dsDNA into and through the RuvAB complex. RuvB forms 2 homohexamers on either side of HJ DNA bound by 1 or 2 RuvA tetramers; 4 subunits per hexamer contact DNA at a time. Coordinated motions by a converter formed by DNA-disengaged RuvB subunits stimulates ATP hydrolysis and nucleotide exchange. Immobilization of the converter enables RuvB to convert the ATP-contained energy into a lever motion, pulling 2 nucleotides of DNA out of the RuvA tetramer per ATP hydrolyzed, thus driving DNA branch migration. The RuvB motors rotate together with the DNA substrate, which together with the progressing nucleotide cycle form the mechanistic basis for DNA recombination by continuous HJ branch migration. Branch migration allows RuvC to scan DNA until it finds its consensus sequence, where it cleaves and resolves cruciform DNA. The sequence is that of Holliday junction branch migration complex subunit RuvB from Koribacter versatilis (strain Ellin345).